The chain runs to 61 residues: Large ribosomal subunit protein uL30 (61 aa).

The protein belongs to the universal ribosomal protein uL30 family. As to quaternary structure, part of the 50S ribosomal subunit.

The chain is Large ribosomal subunit protein uL30 from Rubrobacter xylanophilus (strain DSM 9941 / JCM 11954 / NBRC 16129 / PRD-1).